Here is a 305-residue protein sequence, read N- to C-terminus: HPr kinase/phosphorylase (305 aa).

Catalysis depends on residues His136 and Lys157. ATP is bound at residue 151 to 158 (GESGIGKS). Mg(2+) is bound at residue Ser158. Catalysis depends on Asp175, which acts as the Proton acceptor; for phosphorylation activity. Proton donor; for dephosphorylation activity. Residues 198–207 (LEVRGLGIID) are important for the catalytic mechanism of both phosphorylation and dephosphorylation. Glu199 contributes to the Mg(2+) binding site. Arg240 is a catalytic residue. Residues 261 to 266 (PIRPGR) are important for the catalytic mechanism of dephosphorylation.

Belongs to the HPrK/P family. In terms of assembly, homohexamer. Requires Mg(2+) as cofactor.

The enzyme catalyses [HPr protein]-L-serine + ATP = [HPr protein]-O-phospho-L-serine + ADP + H(+). The catalysed reaction is [HPr protein]-O-phospho-L-serine + phosphate + H(+) = [HPr protein]-L-serine + diphosphate. In terms of biological role, catalyzes the ATP- as well as the pyrophosphate-dependent phosphorylation of a specific serine residue in HPr, a phosphocarrier protein of the phosphoenolpyruvate-dependent sugar phosphotransferase system (PTS). HprK/P also catalyzes the pyrophosphate-producing, inorganic phosphate-dependent dephosphorylation (phosphorolysis) of seryl-phosphorylated HPr (P-Ser-HPr). The two antagonistic activities of HprK/P are regulated by several intracellular metabolites, which change their concentration in response to the absence or presence of rapidly metabolisable carbon sources (glucose, fructose, etc.) in the growth medium. Therefore, by controlling the phosphorylation state of HPr, HPrK/P is a sensor enzyme that plays a major role in the regulation of carbon metabolism and sugar transport: it mediates carbon catabolite repression (CCR), and regulates PTS-catalyzed carbohydrate uptake and inducer exclusion. In Clostridium tetani (strain Massachusetts / E88), this protein is HPr kinase/phosphorylase.